Reading from the N-terminus, the 397-residue chain is Citrate synthase (397 aa).

Residues His266 and Asp320 contribute to the active site.

The protein belongs to the citrate synthase family.

It catalyses the reaction oxaloacetate + acetyl-CoA + H2O = citrate + CoA + H(+). It functions in the pathway carbohydrate metabolism; tricarboxylic acid cycle; isocitrate from oxaloacetate: step 1/2. The sequence is that of Citrate synthase (gltA) from Synechocystis sp. (strain ATCC 27184 / PCC 6803 / Kazusa).